The chain runs to 253 residues: MKVLATLLASVGLVAAHGYVDNATIGGQYYQMLTVSQFYQPYMDPYMGNNKPQRVSRSIPGNGPVENVDSIDVQCNAGSVPAPLHAPAAAGSTVTLHWTLWPDSHMGPVITYMARCPDSGCQNWSPGTSYVPRCPNVVRINANLSKGPSGSKSSKVAYTIPSCIRPGYYLVRHEIIALHAAWAYPGAQFYPGCHQLQVTGGGSTNPTNLVSFPGAYKSTDPGVTYDAYKEIETDMDLSIAQAYTIPGPAVFTC.

The signal sequence occupies residues 1 to 16 (MKVLATLLASVGLVAA). His-17 is a binding site for Cu(2+). A glycan (N-linked (GlcNAc...) asparagine) is linked at Asn-22. 2 disulfides stabilise this stretch: Cys-75–Cys-193 and Cys-163–Cys-253. Cu(2+) is bound at residue His-105. Asn-143 is a glycosylation site (N-linked (GlcNAc...) asparagine). Positions 179 and 188 each coordinate O2. A Cu(2+)-binding site is contributed by Tyr-190.

This sequence belongs to the polysaccharide monooxygenase AA9 family. The cofactor is Cu(2+).

It is found in the secreted. The enzyme catalyses [(1-&gt;4)-beta-D-glucosyl]n+m + reduced acceptor + O2 = 4-dehydro-beta-D-glucosyl-[(1-&gt;4)-beta-D-glucosyl]n-1 + [(1-&gt;4)-beta-D-glucosyl]m + acceptor + H2O.. In terms of biological role, lytic polysaccharide monooxygenase (LPMO) that depolymerizes crystalline and amorphous polysaccharides via the oxidation of scissile alpha- or beta-(1-4)-glycosidic bonds, yielding C1 or C4 oxidation products. Catalysis by LPMOs requires the reduction of the active-site copper from Cu(II) to Cu(I) by a reducing agent and H(2)O(2) or O(2) as a cosubstrate. In Podospora anserina (strain S / ATCC MYA-4624 / DSM 980 / FGSC 10383) (Pleurage anserina), this protein is AA9 family lytic polysaccharide monooxygenase F.